We begin with the raw amino-acid sequence, 318 residues long: NADH-ubiquinone oxidoreductase chain 1 (318 aa).

8 helical membrane passes run 3-23 (MVNL…LTLI), 70-90 (MFII…IPLP), 100-120 (LAVL…LWSG), 146-166 (LAII…STLI), 171-191 (HTWL…STLA), 222-242 (LFFM…AILF), 253-273 (ELYT…FLWI), and 294-314 (LPLT…MAGI).

This sequence belongs to the complex I subunit 1 family.

The protein localises to the mitochondrion inner membrane. It catalyses the reaction a ubiquinone + NADH + 5 H(+)(in) = a ubiquinol + NAD(+) + 4 H(+)(out). Functionally, core subunit of the mitochondrial membrane respiratory chain NADH dehydrogenase (Complex I) that is believed to belong to the minimal assembly required for catalysis. Complex I functions in the transfer of electrons from NADH to the respiratory chain. The immediate electron acceptor for the enzyme is believed to be ubiquinone. This is NADH-ubiquinone oxidoreductase chain 1 (MT-ND1) from Pteropus vampyrus (Large flying fox).